A 339-amino-acid polypeptide reads, in one-letter code: Anthranilate phosphoribosyltransferase (339 aa).

Residues G79, 82 to 83, T87, 89 to 92, 107 to 115, and S119 contribute to the 5-phospho-alpha-D-ribose 1-diphosphate site; these read GD, NVST, and KHGNRAVSS. Residue G79 coordinates anthranilate. S91 lines the Mg(2+) pocket. An anthranilate-binding site is contributed by N110. Anthranilate is bound at residue R165. Residues D224 and E225 each contribute to the Mg(2+) site.

It belongs to the anthranilate phosphoribosyltransferase family. In terms of assembly, homodimer. Mg(2+) serves as cofactor.

It catalyses the reaction N-(5-phospho-beta-D-ribosyl)anthranilate + diphosphate = 5-phospho-alpha-D-ribose 1-diphosphate + anthranilate. Its pathway is amino-acid biosynthesis; L-tryptophan biosynthesis; L-tryptophan from chorismate: step 2/5. In terms of biological role, catalyzes the transfer of the phosphoribosyl group of 5-phosphorylribose-1-pyrophosphate (PRPP) to anthranilate to yield N-(5'-phosphoribosyl)-anthranilate (PRA). The protein is Anthranilate phosphoribosyltransferase of Geobacillus stearothermophilus (Bacillus stearothermophilus).